The following is a 426-amino-acid chain: Serine--tRNA ligase (426 aa).

233-235 (TAE) is an L-serine binding site. 264-266 (RSE) lines the ATP pocket. Glu287 lines the L-serine pocket. 351-354 (EISS) is an ATP binding site. Ser387 lines the L-serine pocket.

Belongs to the class-II aminoacyl-tRNA synthetase family. Type-1 seryl-tRNA synthetase subfamily. Homodimer. The tRNA molecule binds across the dimer.

The protein resides in the cytoplasm. It carries out the reaction tRNA(Ser) + L-serine + ATP = L-seryl-tRNA(Ser) + AMP + diphosphate + H(+). It catalyses the reaction tRNA(Sec) + L-serine + ATP = L-seryl-tRNA(Sec) + AMP + diphosphate + H(+). It functions in the pathway aminoacyl-tRNA biosynthesis; selenocysteinyl-tRNA(Sec) biosynthesis; L-seryl-tRNA(Sec) from L-serine and tRNA(Sec): step 1/1. In terms of biological role, catalyzes the attachment of serine to tRNA(Ser). Is also able to aminoacylate tRNA(Sec) with serine, to form the misacylated tRNA L-seryl-tRNA(Sec), which will be further converted into selenocysteinyl-tRNA(Sec). The polypeptide is Serine--tRNA ligase (Clostridium botulinum (strain Hall / ATCC 3502 / NCTC 13319 / Type A)).